Reading from the N-terminus, the 332-residue chain is Caffeoylshikimate esterase (332 aa).

Residues 1–13 are compositionally biased toward low complexity; that stretch reads MPSEAESSANSAP. The segment at 1–26 is disordered; sequence MPSEAESSANSAPATPPPPPNFWGTM. S147 serves as the catalytic Nucleophile. Active-site charge relay system residues include D268 and H298.

It belongs to the AB hydrolase superfamily. Monoacylglycerol lipase family. As to quaternary structure, interacts with ACBP2. In terms of tissue distribution, expressed in vasculature of roots and leaves, stems, flowers and siliques.

The protein localises to the cell membrane. It carries out the reaction 5-O-[(E)-caffeoyl]-shikimate + H2O = shikimate + (E)-caffeate + H(+). In terms of biological role, esterase involved in the biosynthesis of lignin. Hydrolyzes caffeoylshikimate into caffeate and shikimate. Together with 4-coumarate--CoA ligase (4CL), acts on an alternative reaction for the formation of caffeoyl-CoA and bypasses the second reaction of shikimate O-hydroxycinnamoyltransferase (HST). Also accepts 4-coumaroylshikimate as substrate, but with lower activity. According to PubMed:20345607 and PubMed:22915575, possesses monoacylglycerol O-acyltransferase, monoacylglycerol lipase and lysophospholipase activities in vitro. With the association of ACBP2, may promote the degradation of lysophosphatidylcholine and detoxify the peroxidized membrane in response to cadmium-induced oxidative stress. However these results require additional confirmation in vivo. This chain is Caffeoylshikimate esterase (CSE), found in Arabidopsis thaliana (Mouse-ear cress).